Reading from the N-terminus, the 525-residue chain is GMP synthase [glutamine-hydrolyzing] (525 aa).

A Glutamine amidotransferase type-1 domain is found at Lys-8 to Asn-207. The active-site Nucleophile is Cys-85. Residues His-181 and Glu-183 contribute to the active site. In terms of domain architecture, GMPS ATP-PPase spans Trp-208–Arg-400. Ser-235–Ser-241 is a binding site for ATP.

Homodimer.

The catalysed reaction is XMP + L-glutamine + ATP + H2O = GMP + L-glutamate + AMP + diphosphate + 2 H(+). It participates in purine metabolism; GMP biosynthesis; GMP from XMP (L-Gln route): step 1/1. Its function is as follows. Catalyzes the synthesis of GMP from XMP. This chain is GMP synthase [glutamine-hydrolyzing], found in Shewanella halifaxensis (strain HAW-EB4).